Consider the following 134-residue polypeptide: ATP synthase epsilon chain, chloroplastic (134 aa).

It belongs to the ATPase epsilon chain family. As to quaternary structure, F-type ATPases have 2 components, CF(1) - the catalytic core - and CF(0) - the membrane proton channel. CF(1) has five subunits: alpha(3), beta(3), gamma(1), delta(1), epsilon(1). CF(0) has three main subunits: a, b and c.

It localises to the plastid. Its subcellular location is the chloroplast thylakoid membrane. Functionally, produces ATP from ADP in the presence of a proton gradient across the membrane. The sequence is that of ATP synthase epsilon chain, chloroplastic from Pyropia yezoensis (Susabi-nori).